Here is a 108-residue protein sequence, read N- to C-terminus: uncharacterized protein (108 aa).

3 consecutive transmembrane segments (helical) span residues L24 to L44, A55 to M75, and R88 to I108.

The protein to cation A.eutrophus efflux system protein CzcD.

It is found in the cell membrane. This is an uncharacterized protein from Geobacillus stearothermophilus (Bacillus stearothermophilus).